The sequence spans 62 residues: Conotoxin Qc5.2 (62 aa).

The first 22 residues, 1–22, serve as a signal peptide directing secretion; it reads MRCVPVFIILLLLSPSAPSVDA. Residues 23–48 constitute a propeptide that is removed on maturation; it reads HPMTKDDVPQASLHDDAKRTLQVPWM. V60 is subject to Valine amide.

The protein belongs to the conotoxin T superfamily. Contains 2 disulfide bonds that can be either 'C1-C3, C2-C4' or 'C1-C4, C2-C3', since these disulfide connectivities have been observed for conotoxins with cysteine framework V (for examples, see AC P0DQQ7 and AC P81755). In terms of tissue distribution, expressed by the venom duct.

It localises to the secreted. The sequence is that of Conotoxin Qc5.2 from Conus quercinus (Oak cone).